We begin with the raw amino-acid sequence, 224 residues long: Uridylate kinase (224 aa).

Residue 9 to 10 (GS) coordinates ATP. A UMP-binding site is contributed by Gly43. Residues Gly44 and Arg48 each contribute to the ATP site. UMP is bound by residues Asp65 and 113 to 119 (TEPAHST). ATP-binding residues include Thr139, Tyr145, and Asp148.

Belongs to the UMP kinase family. As to quaternary structure, homohexamer.

Its subcellular location is the cytoplasm. The enzyme catalyses UMP + ATP = UDP + ADP. It functions in the pathway pyrimidine metabolism; CTP biosynthesis via de novo pathway; UDP from UMP (UMPK route): step 1/1. With respect to regulation, inhibited by UTP. In terms of biological role, catalyzes the reversible phosphorylation of UMP to UDP. The chain is Uridylate kinase from Methanothermobacter thermautotrophicus (strain ATCC 29096 / DSM 1053 / JCM 10044 / NBRC 100330 / Delta H) (Methanobacterium thermoautotrophicum).